The primary structure comprises 122 residues: Acidic phospholipase A2 Tpu-E6b (122 aa).

Cystine bridges form between Cys26–Cys115, Cys28–Cys44, Cys43–Cys95, Cys49–Cys122, Cys50–Cys88, Cys57–Cys81, and Cys75–Cys86. Positions 27, 29, and 31 each coordinate Ca(2+). His47 is a catalytic residue. Ca(2+) is bound at residue Asp48. Asp89 is a catalytic residue.

Monomer. Requires Ca(2+) as cofactor. Expressed by the venom gland.

The protein localises to the secreted. It catalyses the reaction a 1,2-diacyl-sn-glycero-3-phosphocholine + H2O = a 1-acyl-sn-glycero-3-phosphocholine + a fatty acid + H(+). Functionally, snake venom phospholipase A2 (PLA2) that weakly inhibits ADP-induced platelet aggregation when tested on platelet rich plasma from human and rabbit blood (15-25% of inhibition at 5-10 ug of enzyme). Exhibits moderate hydrolytic activities toward L-dipalmitoyl phosphatidylcholine. PLA2 catalyzes the calcium-dependent hydrolysis of the 2-acyl groups in 3-sn-phosphoglycerides. The protein is Acidic phospholipase A2 Tpu-E6b of Craspedocephalus puniceus (Flat-nosed pitviper).